A 313-amino-acid polypeptide reads, in one-letter code: Iron-sulfur protein required for NADH dehydrogenase, mitochondrial (313 aa).

A mitochondrion-targeting transit peptide spans M1–A22. G51–S58 provides a ligand contact to ATP.

It belongs to the Mrp/NBP35 ATP-binding proteins family. [4Fe-4S] cluster is required as a cofactor.

It localises to the mitochondrion matrix. Its function is as follows. Essential during early vegetative growth. Required for the assembly of the mitochondrial membrane respiratory chain NADH dehydrogenase (Complex I). Involved in mitochondrial translation activity. May deliver of one or more Fe-S clusters to complex I subunits. The sequence is that of Iron-sulfur protein required for NADH dehydrogenase, mitochondrial from Arabidopsis thaliana (Mouse-ear cress).